We begin with the raw amino-acid sequence, 341 residues long: Formimidoylglutamase (341 aa).

Residues His133, Asp162, His164, Asp166, Cys253, and Asp255 each coordinate Mn(2+).

This sequence belongs to the arginase family. Mn(2+) is required as a cofactor.

It catalyses the reaction N-formimidoyl-L-glutamate + H2O = formamide + L-glutamate. It functions in the pathway amino-acid degradation; L-histidine degradation into L-glutamate; L-glutamate from N-formimidoyl-L-glutamate (hydrolase route): step 1/1. Catalyzes the conversion of N-formimidoyl-L-glutamate to L-glutamate and formamide. The chain is Formimidoylglutamase from Aromatoleum aromaticum (strain DSM 19018 / LMG 30748 / EbN1) (Azoarcus sp. (strain EbN1)).